The following is a 798-amino-acid chain: Probable DEAD-box ATP-dependent RNA helicase 48 (798 aa).

3 disordered regions span residues lysine 76–lysine 100, aspartate 117–isoleucine 148, and phenylalanine 236–isoleucine 257. The span at glycine 132 to isoleucine 148 shows a compositional bias: low complexity. Acidic residues predominate over residues serine 242 to aspartate 252. Positions lysine 328–aspartate 356 match the Q motif motif. One can recognise a Helicase ATP-binding domain in the interval leucine 359 to tyrosine 543. Alanine 372–serine 379 is an ATP binding site. Residues aspartate 491–aspartate 494 carry the DEAD box motif. The Helicase C-terminal domain maps to leucine 577–serine 726.

It belongs to the DEAD box helicase family.

It carries out the reaction ATP + H2O = ADP + phosphate + H(+). This Arabidopsis thaliana (Mouse-ear cress) protein is Probable DEAD-box ATP-dependent RNA helicase 48 (RH48).